The primary structure comprises 442 residues: Adenylosuccinate synthetase (442 aa).

Residues 16-22 (GDEGKGK) and 44-46 (GHT) each bind GTP. The Proton acceptor role is filled by Asp17. Mg(2+) is bound by residues Asp17 and Gly44. Residues 17-20 (DEGK), 42-45 (NAGH), Thr133, Arg147, Gln228, Thr243, and Arg307 each bind IMP. Residue His45 is the Proton donor of the active site. 303-309 (AVTGRPR) is a substrate binding site. GTP is bound by residues Arg309, 335–337 (KLD), and 417–419 (STG).

Belongs to the adenylosuccinate synthetase family. In terms of assembly, homodimer. The cofactor is Mg(2+).

It is found in the cytoplasm. The catalysed reaction is IMP + L-aspartate + GTP = N(6)-(1,2-dicarboxyethyl)-AMP + GDP + phosphate + 2 H(+). The protein operates within purine metabolism; AMP biosynthesis via de novo pathway; AMP from IMP: step 1/2. Plays an important role in the de novo pathway of purine nucleotide biosynthesis. Catalyzes the first committed step in the biosynthesis of AMP from IMP. This chain is Adenylosuccinate synthetase, found in Koribacter versatilis (strain Ellin345).